The following is a 511-amino-acid chain: Ectonucleoside triphosphate diphosphohydrolase 1 (511 aa).

Topologically, residues 1-16 are cytoplasmic; that stretch reads MEDIKDSKVKRFCSKN. A helical membrane pass occupies residues 17–37; the sequence is ILIILGFSSVLAVIALIAVGL. The Extracellular segment spans residues 38 to 478; it reads THNKPLPENV…LSPPLPHSTY (441 aa). Residues 46–171 form an N-terminal lobe region; it reads NVKYGIVLDA…DFQGAKIITG (126 aa). A glycan (N-linked (GlcNAc...) asparagine) is linked at Asn73. A disulfide bond links Cys84 and Cys108. Glu174 serves as the catalytic Proton acceptor. The segment at 205–441 is C-terminal lobe; that stretch reads QATFGALDLG…GTSWDQIHFM (237 aa). N-linked (GlcNAc...) asparagine glycosylation is found at Asn226, Asn291, and Asn333. Intrachain disulfides connect Cys254-Cys300 and Cys281-Cys324. Residues Cys337 and Cys342 are joined by a disulfide bond. A glycan (N-linked (GlcNAc...) asparagine) is linked at Asn374. A disulfide bridge links Cys391 with Cys414. Residues Asn429 and Asn458 are each glycosylated (N-linked (GlcNAc...) asparagine). Residues 479 to 499 traverse the membrane as a helical segment; sequence ISLMVLFSLVLVAMVITGLFI. Topologically, residues 500–511 are cytoplasmic; that stretch reads FSKPSYFWKEAV.

This sequence belongs to the GDA1/CD39 NTPase family. In terms of assembly, homodimer; disulfide-linked. Ca(2+) serves as cofactor. Mg(2+) is required as a cofactor. N-glycosylated. In terms of processing, the N-terminus is blocked. Post-translationally, palmitoylated on Cys-13; which is required for caveola targeting. In terms of tissue distribution, expressed in primary neurons and astrocytes, kidney, liver, muscle, thymus, lung and spleen.

It is found in the membrane. It localises to the caveola. It carries out the reaction a ribonucleoside 5'-triphosphate + 2 H2O = a ribonucleoside 5'-phosphate + 2 phosphate + 2 H(+). The enzyme catalyses a ribonucleoside 5'-triphosphate + H2O = a ribonucleoside 5'-diphosphate + phosphate + H(+). It catalyses the reaction a ribonucleoside 5'-diphosphate + H2O = a ribonucleoside 5'-phosphate + phosphate + H(+). The catalysed reaction is ATP + 2 H2O = AMP + 2 phosphate + 2 H(+). It carries out the reaction ATP + H2O = ADP + phosphate + H(+). The enzyme catalyses ADP + H2O = AMP + phosphate + H(+). It catalyses the reaction CTP + 2 H2O = CMP + 2 phosphate + 2 H(+). The catalysed reaction is CTP + H2O = CDP + phosphate + H(+). It carries out the reaction CDP + H2O = CMP + phosphate + H(+). The enzyme catalyses GTP + 2 H2O = GMP + 2 phosphate + 2 H(+). It catalyses the reaction GTP + H2O = GDP + phosphate + H(+). The catalysed reaction is GDP + H2O = GMP + phosphate + H(+). It carries out the reaction ITP + 2 H2O = IMP + 2 phosphate + 2 H(+). The enzyme catalyses ITP + H2O = IDP + phosphate + H(+). It catalyses the reaction IDP + H2O = IMP + phosphate + H(+). The catalysed reaction is UTP + 2 H2O = UMP + 2 phosphate + 2 H(+). It carries out the reaction UTP + H2O = UDP + phosphate + H(+). The enzyme catalyses UDP + H2O = UMP + phosphate + H(+). In terms of biological role, catalyzes the hydrolysis of both di- and triphosphate nucleotides (NDPs and NTPs) and hydrolyze NTPs to nucleotide monophosphates (NMPs) in two distinct successive phosphate-releasing steps, with NDPs as intermediates and participates in the regulation of extracellular levels of nucleotides. By hydrolyzing proinflammatory ATP and platelet-activating ADP to AMP, it blocks platelet aggregation and supports blood flow. This chain is Ectonucleoside triphosphate diphosphohydrolase 1, found in Rattus norvegicus (Rat).